The primary structure comprises 130 residues: Histone H2A.6 (130 aa).

Residues 1–12 (MAGRGKTLGSGG) are compositionally biased toward gly residues. The interval 1–23 (MAGRGKTLGSGGAKKATSRSSKA) is disordered.

The protein belongs to the histone H2A family. As to quaternary structure, the nucleosome is a histone octamer containing two molecules each of H2A, H2B, H3 and H4 assembled in one H3-H4 heterotetramer and two H2A-H2B heterodimers. The octamer wraps approximately 147 bp of DNA. Interacts with VIP1. Not ubiquitinated. Low level of expression, mainly in dividing tissues: floral buds, margins of newly emerging leaves, expanding leaves and the meristematic zone of root tips. Also expressed in many non-dividing cells of the elongation zone of the root.

The protein resides in the nucleus. It is found in the chromosome. In terms of biological role, core component of nucleosome. Nucleosomes wrap and compact DNA into chromatin, limiting DNA accessibility to the cellular machineries which require DNA as a template. Histones thereby play a central role in transcription regulation, DNA repair, DNA replication and chromosomal stability. DNA accessibility is regulated via a complex set of post-translational modifications of histones, also called histone code, and nucleosome remodeling. Required for the T-DNA integration step of plant transformation by Agrobacterium. May play an important role in illegitimate recombination. The sequence is that of Histone H2A.6 (RAT5) from Arabidopsis thaliana (Mouse-ear cress).